A 264-amino-acid chain; its full sequence is Undecaprenyl-diphosphatase (264 aa).

The next 6 membrane-spanning stretches (helical) occupy residues 41–61 (NLAFTIVVHVATVCSTLVILW), 82–102 (YVINIVISMIPIGIVGVFFKD), 106–126 (AIFGSGLMIVGCMLLLTAALL), 140–160 (ISMKDAFIIGLAQACAVLPGL), 213–233 (IPALSLIVGFLAAFVAGCLAC), and 244–264 (KLIYFAIYCAIAGLAVIITQL).

Belongs to the UppP family.

It is found in the cell inner membrane. It catalyses the reaction di-trans,octa-cis-undecaprenyl diphosphate + H2O = di-trans,octa-cis-undecaprenyl phosphate + phosphate + H(+). Catalyzes the dephosphorylation of undecaprenyl diphosphate (UPP). Confers resistance to bacitracin. This is Undecaprenyl-diphosphatase from Bacteroides thetaiotaomicron (strain ATCC 29148 / DSM 2079 / JCM 5827 / CCUG 10774 / NCTC 10582 / VPI-5482 / E50).